A 686-amino-acid chain; its full sequence is Aminodeoxychorismate synthase (686 aa).

Residues 2–194 (RTLLIDNYDS…RDLALAHHRA (193 aa)) enclose the Glutamine amidotransferase type-1 domain. Cys81 functions as the Nucleophile in the catalytic mechanism. Active-site residues include His168 and Glu170. Residues 233–686 (LDSSSVLEGA…LDGSAVAGAR (454 aa)) are PABB component.

This sequence in the C-terminal section; belongs to the anthranilate synthase component I family.

The enzyme catalyses chorismate + L-glutamine = 4-amino-4-deoxychorismate + L-glutamate. The protein operates within antibiotic biosynthesis. In terms of biological role, involved in chloramphenicol biosynthesis. Catalyzes the biosynthesis of 4-amino-4-deoxychorismate (ADC) from chorismate and glutamine. The protein is Aminodeoxychorismate synthase of Streptomyces venezuelae (strain ATCC 10712 / CBS 650.69 / DSM 40230 / JCM 4526 / NBRC 13096 / PD 04745).